We begin with the raw amino-acid sequence, 281 residues long: 4-diphosphocytidyl-2-C-methyl-D-erythritol kinase (281 aa).

Lysine 15 is an active-site residue. 98-108 (PTGAGLGGGSS) serves as a coordination point for ATP. The active site involves aspartate 140.

It belongs to the GHMP kinase family. IspE subfamily.

The enzyme catalyses 4-CDP-2-C-methyl-D-erythritol + ATP = 4-CDP-2-C-methyl-D-erythritol 2-phosphate + ADP + H(+). The protein operates within isoprenoid biosynthesis; isopentenyl diphosphate biosynthesis via DXP pathway; isopentenyl diphosphate from 1-deoxy-D-xylulose 5-phosphate: step 3/6. In terms of biological role, catalyzes the phosphorylation of the position 2 hydroxy group of 4-diphosphocytidyl-2C-methyl-D-erythritol. The polypeptide is 4-diphosphocytidyl-2-C-methyl-D-erythritol kinase (Neisseria meningitidis serogroup B (strain ATCC BAA-335 / MC58)).